The chain runs to 795 residues: Protocadherin beta-4 (795 aa).

The signal sequence occupies residues 1–27 (MKKLGRIHPNRQVLAFILMVFLSQVRL). Over 28–689 (EPIRYSVLEE…AQADSLTVYL (662 aa)) the chain is Extracellular. Cadherin domains follow at residues 34–132 (VLEE…SPIF), 137–241 (VLLK…APEF), 246–346 (YGVQ…PPEL), 351–450 (LTSS…APAF), and 455–560 (YTLF…SPFV). Asn-183 carries N-linked (GlcNAc...) asparagine glycosylation. Residues Asn-417 and Asn-435 are each glycosylated (N-linked (GlcNAc...) asparagine). Residue Asn-566 is glycosylated (N-linked (GlcNAc...) asparagine). Residues 567-670 (GSAPCTELVP…LVDGFSQPYL (104 aa)) enclose the Cadherin 6 domain. A helical transmembrane segment spans residues 690 to 710 (VVALASVSSLFLFSVLLFVAV). The Cytoplasmic portion of the chain corresponds to 711–795 (RLCRRSRAAS…PKFRNSLVFS (85 aa)).

It localises to the cell membrane. Potential calcium-dependent cell-adhesion protein. May be involved in the establishment and maintenance of specific neuronal connections in the brain. The protein is Protocadherin beta-4 (PCDHB4) of Homo sapiens (Human).